The primary structure comprises 246 residues: Ribulose-phosphate 3-epimerase (246 aa).

Ser9 contributes to the substrate binding site. His34, Asp36, and His83 together coordinate a divalent metal cation. Catalysis depends on Asp36, which acts as the Proton acceptor. Substrate-binding positions include His83, 159–162, 188–190, and 210–212; these read GFGG, DGG, and GTS. Asp188 is an a divalent metal cation binding site. Asp188 serves as the catalytic Proton donor.

The protein belongs to the ribulose-phosphate 3-epimerase family. The cofactor is Co(2+). Fe(2+) serves as cofactor. It depends on Mn(2+) as a cofactor. Zn(2+) is required as a cofactor.

The catalysed reaction is D-ribulose 5-phosphate = D-xylulose 5-phosphate. Its pathway is carbohydrate degradation; pentose phosphate pathway; D-xylulose 5-phosphate from D-ribulose 5-phosphate (non-oxidative stage): step 1/1. Catalyzes the reversible epimerization of D-ribulose 5-phosphate to D-xylulose 5-phosphate. This Candida glabrata (strain ATCC 2001 / BCRC 20586 / JCM 3761 / NBRC 0622 / NRRL Y-65 / CBS 138) (Yeast) protein is Ribulose-phosphate 3-epimerase (RPE1).